The primary structure comprises 61 residues: Small ribosomal subunit protein uS14 (61 aa).

Cys-24, Cys-27, Cys-40, and Cys-43 together coordinate Zn(2+).

It belongs to the universal ribosomal protein uS14 family. Zinc-binding uS14 subfamily. Part of the 30S ribosomal subunit. Contacts proteins S3 and S10. The cofactor is Zn(2+).

Functionally, binds 16S rRNA, required for the assembly of 30S particles and may also be responsible for determining the conformation of the 16S rRNA at the A site. This Pelobacter propionicus (strain DSM 2379 / NBRC 103807 / OttBd1) protein is Small ribosomal subunit protein uS14.